A 124-amino-acid chain; its full sequence is Small ribosomal subunit protein uS12 (124 aa).

Positions methionine 1 to glutamine 29 are disordered. 3-methylthioaspartic acid is present on aspartate 90.

Belongs to the universal ribosomal protein uS12 family. As to quaternary structure, part of the 30S ribosomal subunit. Contacts proteins S8 and S17. May interact with IF1 in the 30S initiation complex.

Functionally, with S4 and S5 plays an important role in translational accuracy. Its function is as follows. Interacts with and stabilizes bases of the 16S rRNA that are involved in tRNA selection in the A site and with the mRNA backbone. Located at the interface of the 30S and 50S subunits, it traverses the body of the 30S subunit contacting proteins on the other side and probably holding the rRNA structure together. The combined cluster of proteins S8, S12 and S17 appears to hold together the shoulder and platform of the 30S subunit. This chain is Small ribosomal subunit protein uS12, found in Anaplasma marginale (strain Florida).